A 531-amino-acid chain; its full sequence is MSGRGAGGFPLPPLSPGGGAVAAALGAPPPPAGPGMLPGPALRGPGPAGGVGGPGAAAFRPMGPAGPAAQYQRPGMSPGSRMPMAGLQVGPPAGSPFGTAAPLRPGMPPTMMDPFRKRLLVPQAQPPMPAQRRGLKRRKMADKVLPQRIRELVPESQAYMDLLAFERKLDQTIARKRMEIQEAIKKPLTQKRKLRIYISNTFSPSKAEGDTAGTTGTPGGTPAGDKVASWELRVEGKLLDDPSKQKRKFSSFFKSLVIELDKELYGPDNHLVEWHRMPTTQETDGFQVKRPGDLNVKCTLLLMLDHQPPQYKLDPRLARLLGVHTQTRAAIMQALWLYIKHNQLQDGHEREYINCNRYFRQIFSCGRLRFSEIPMKLAGLLQHPDPIVINHVISVDPNDQKKTACYDIDVEVDDPLKAQMSNFLASTTNQQEIASLDVKIHETIESINQLKTQRDFMLSFSTDPQDFIQEWLRSQRRDLKIITDVIGNPEEERRAAFYHQPWAQEAVGRHIFAKVQQRRQELEQVLGIRLT.

Residues Arg-81 and Arg-104 each carry the asymmetric dimethylarginine modification. The residue at position 203 (Ser-203) is a Phosphoserine. Residues 205–227 (SKAEGDTAGTTGTPGGTPAGDKV) are disordered. Position 217 is a phosphothreonine (Thr-217). Lys-226 is covalently cross-linked (Glycyl lysine isopeptide (Lys-Gly) (interchain with G-Cter in SUMO2)). The SWIB/MDM2 domain occupies 306-383 (HQPPQYKLDP…PMKLAGLLQH (78 aa)).

The protein belongs to the SMARCD family. In terms of assembly, component of the multiprotein chromatin-remodeling complexes SWI/SNF: SWI/SNF-A (BAF), SWI/SNF-B (PBAF) and related complexes. The canonical complex contains a catalytic subunit (either SMARCA4/BRG1/BAF190A or SMARCA2/BRM/BAF190B), and at least SMARCE1, ACTL6A/BAF53, SMARCC1/BAF155, SMARCC2/BAF170, and SMARCB1/SNF5/BAF47. Other subunits specific to each of the complexes may also be present permitting several possible combinations developmentally and tissue specific. Component of the BAF complex, which includes at least actin (ACTB), ARID1A/BAF250A, ARID1B/BAF250B, SMARCA2/BRM, SMARCA4/BRG1, ACTL6A/BAF53, ACTL6B/BAF53B, SMARCE1/BAF57, SMARCC1/BAF155, SMARCC2/BAF170, SMARCB1/SNF5/INI1, and one or more SMARCD1/BAF60A, SMARCD2/BAF60B, or SMARCD3/BAF60C. In muscle cells, the BAF complex also contains DPF3. Component of the SWI/SNF-B (PBAF) chromatin remodeling complex, at least composed of SMARCA4/BRG1, SMARCB1/BAF47/SNF5, ACTL6A/BAF53A or ACTL6B/BAF53B, SMARCE1/BAF57, SMARCD1/BAF60A, SMARCD2/BAF60B, perhaps SMARCD3/BAF60C, SMARCC1/BAF155, SMARCC2/BAF170, PBRM1/BAF180, ARID2/BAF200 and actin (ACTB). Interacts with UNKL. Interacts with CEBPE. In terms of processing, ubiquitinated through a signaling process involving RAC1 and the RING finger protein UNKL.

Its subcellular location is the nucleus. In terms of biological role, involved in transcriptional activation and repression of select genes by chromatin remodeling (alteration of DNA-nucleosome topology). Component of SWI/SNF chromatin remodeling complexes that carry out key enzymatic activities, changing chromatin structure by altering DNA-histone contacts within a nucleosome in an ATP-dependent manner. Critical regulator of myeloid differentiation, controlling granulocytopoiesis and the expression of genes involved in neutrophil granule formation. The chain is SWI/SNF-related matrix-associated actin-dependent regulator of chromatin subfamily D member 2 (SMARCD2) from Bos taurus (Bovine).